Here is a 110-residue protein sequence, read N- to C-terminus: Putative UPF0377 protein YIR040C (110 aa).

It belongs to the UPF0377 family.

This is Putative UPF0377 protein YIR040C from Saccharomyces cerevisiae (strain ATCC 204508 / S288c) (Baker's yeast).